A 339-amino-acid polypeptide reads, in one-letter code: Cathepsin B (339 aa).

The N-terminal stretch at 1-17 is a signal peptide; it reads MWQLWASLCCLLVLANA. The propeptide at 18 to 79 is activation peptide; the sequence is RSRPSFHPLS…QRVMFTEDLK (62 aa). Intrachain disulfides connect C93–C122, C105–C150, C141–C207, C142–C146, C179–C211, and C187–C198. Residue C108 is part of the active site. N192 carries N-linked (GlcNAc...) asparagine glycosylation. An N6-acetyllysine modification is found at K220. Active-site residues include H278 and N298. Positions 334-339 are excised as a propeptide; that stretch reads QYWEKI.

This sequence belongs to the peptidase C1 family. In terms of assembly, dimer of a heavy chain and a light chain cross-linked by a disulfide bond. Interacts with SRPX2. Directly interacts with SHKBP1. In terms of tissue distribution, expressed in the stratum spinosum of the epidermis. Weak expression is detected in the stratum granulosum.

It is found in the lysosome. It localises to the melanosome. Its subcellular location is the secreted. The protein localises to the extracellular space. The protein resides in the apical cell membrane. The enzyme catalyses Hydrolysis of proteins with broad specificity for peptide bonds. Preferentially cleaves -Arg-Arg-|-Xaa bonds in small molecule substrates (thus differing from cathepsin L). In addition to being an endopeptidase, shows peptidyl-dipeptidase activity, liberating C-terminal dipeptides.. Inhibited by leupeptin. Functionally, thiol protease which is believed to participate in intracellular degradation and turnover of proteins. Cleaves matrix extracellular phosphoglycoprotein MEPE. Involved in the solubilization of cross-linked TG/thyroglobulin in the thyroid follicle lumen. Has also been implicated in tumor invasion and metastasis. This Homo sapiens (Human) protein is Cathepsin B (CTSB).